We begin with the raw amino-acid sequence, 214 residues long: Ras-like protein rasZ (214 aa).

16–23 (GDGGVGKT) contributes to the GTP binding site. An Effector region motif is present at residues 38 to 46 (YDPTIEDSY). Residues 63–67 (DTAGQ) and 122–125 (NKSD) contribute to the GTP site. At Cys211 the chain carries Cysteine methyl ester. The S-geranylgeranyl cysteine moiety is linked to residue Cys211. Residues 212 to 214 (KMM) constitute a propeptide, removed in mature form.

Belongs to the small GTPase superfamily. Ras family.

The protein localises to the cell membrane. It catalyses the reaction GTP + H2O = GDP + phosphate + H(+). Ras proteins bind GDP/GTP and possess intrinsic GTPase activity. The sequence is that of Ras-like protein rasZ (rasZ) from Dictyostelium discoideum (Social amoeba).